The chain runs to 260 residues: Putative ATP-binding protein BruAb2_1123 (260 aa).

Residues 5–228 (ISFNNVVMRY…DLPYPRTEAI (224 aa)) enclose the ABC transporter domain. 37–44 (GPSGCGKS) contributes to the ATP binding site.

The protein belongs to the ABC transporter superfamily. The complex is composed of two ATP-binding proteins (BruAb2_1123), two transmembrane proteins (BruAb2_1124) and a solute-binding protein (BruAb2_1122).

It localises to the cell inner membrane. In terms of biological role, probably part of an ABC transporter complex. Probably Responsible for energy coupling to the transport system. In Brucella abortus biovar 1 (strain 9-941), this protein is Putative ATP-binding protein BruAb2_1123.